The chain runs to 155 residues: Small ribosomal subunit protein uS7cz/uS7cy (155 aa).

It belongs to the universal ribosomal protein uS7 family. As to quaternary structure, part of the 30S ribosomal subunit.

Its subcellular location is the plastid. The protein resides in the chloroplast. Functionally, one of the primary rRNA binding proteins, it binds directly to 16S rRNA where it nucleates assembly of the head domain of the 30S subunit. This Daucus carota (Wild carrot) protein is Small ribosomal subunit protein uS7cz/uS7cy (rps7-A).